The primary structure comprises 247 residues: Coproheme decarboxylase (247 aa).

Fe-coproporphyrin III is bound by residues R129, Y143 to K147, H170, Q183, and S221. The active site involves Y143.

This sequence belongs to the ChdC family. Type 1 subfamily. The cofactor is Fe-coproporphyrin III.

The catalysed reaction is Fe-coproporphyrin III + 2 H2O2 + 2 H(+) = heme b + 2 CO2 + 4 H2O. The enzyme catalyses Fe-coproporphyrin III + H2O2 + H(+) = harderoheme III + CO2 + 2 H2O. It carries out the reaction harderoheme III + H2O2 + H(+) = heme b + CO2 + 2 H2O. Its pathway is porphyrin-containing compound metabolism; protoheme biosynthesis. Its function is as follows. Involved in coproporphyrin-dependent heme b biosynthesis. Catalyzes the decarboxylation of Fe-coproporphyrin III (coproheme) to heme b (protoheme IX), the last step of the pathway. The reaction occurs in a stepwise manner with a three-propionate intermediate. The protein is Coproheme decarboxylase of Bacillus anthracis.